Consider the following 323-residue polypeptide: Homoserine kinase (323 aa).

97-107 (PHGRGMGSSGA) is an ATP binding site.

This sequence belongs to the GHMP kinase family. Homoserine kinase subfamily.

The protein localises to the cytoplasm. The catalysed reaction is L-homoserine + ATP = O-phospho-L-homoserine + ADP + H(+). It functions in the pathway amino-acid biosynthesis; L-threonine biosynthesis; L-threonine from L-aspartate: step 4/5. Its function is as follows. Catalyzes the ATP-dependent phosphorylation of L-homoserine to L-homoserine phosphate. The sequence is that of Homoserine kinase from Leifsonia xyli subsp. xyli (strain CTCB07).